A 515-amino-acid chain; its full sequence is Maturase K (515 aa).

This sequence belongs to the intron maturase 2 family. MatK subfamily.

It localises to the plastid. The protein localises to the chloroplast. In terms of biological role, usually encoded in the trnK tRNA gene intron. Probably assists in splicing its own and other chloroplast group II introns. The chain is Maturase K from Pinus contorta (Shore pine).